Consider the following 819-residue polypeptide: Ferric-pyoverdine 358 receptor (819 aa).

The N-terminal stretch at 1-47 (MSKPLPSALNPLAKALLIRHSLRPRHALSRIGMGLALSSALVFQVQA) is a signal peptide. Residues 115 to 122 (NTVTVTAS) carry the TonB box motif. Residues 166–276 (SIRETPQTIT…PSAVVNVIRK (111 aa)) enclose the TBDR plug domain. Residues 281–819 (EFKSHIQAGV…NATVTLRYDF (539 aa)) enclose the TBDR beta-barrel domain. Residues 802 to 819 (YGHYGAPRNATVTLRYDF) carry the TonB C-terminal box motif.

Belongs to the TonB-dependent receptor family.

The protein resides in the cell outer membrane. Functionally, specific receptor for the siderophore ferric pyoverdine (pseudobactin) 358. The sequence is that of Ferric-pyoverdine 358 receptor (pupA) from Pseudomonas putida (Arthrobacter siderocapsulatus).